A 231-amino-acid polypeptide reads, in one-letter code: 2-amino-5-formylamino-6-ribosylaminopyrimidin-4(3H)-one 5'-monophosphate deformylase (231 aa).

Residues Glu29, His31, Asp40, and His110 each coordinate Fe cation.

This sequence belongs to the creatininase superfamily. FAPy deformylase family. Homodimer. Requires Fe(2+) as cofactor. The cofactor is Zn(2+).

The enzyme catalyses 2-amino-5-formylamino-6-(5-phospho-D-ribosylamino)pyrimidin-4(3H)-one + H2O = 2,5-diamino-6-(1-D-ribosylamino)pyrimidin-4(3H)-one 5'-phosphate + formate + H(+). The protein operates within cofactor biosynthesis; coenzyme F420 biosynthesis. Its pathway is cofactor biosynthesis; riboflavin biosynthesis. Functionally, catalyzes the hydrolysis of the formamide of 2-amino-5-formylamino-6-ribosylamino-4(3H)-pyrimidinone 5'-monophosphate (FAPy) to form 2,5-diamino-6-ribosylamino-4(3H)-pyrimidinone 5'-phosphate (APy). This chain is 2-amino-5-formylamino-6-ribosylaminopyrimidin-4(3H)-one 5'-monophosphate deformylase, found in Methanothermobacter marburgensis (strain ATCC BAA-927 / DSM 2133 / JCM 14651 / NBRC 100331 / OCM 82 / Marburg) (Methanobacterium thermoautotrophicum).